The following is a 447-amino-acid chain: Tetratricopeptide repeat protein 23 (447 aa).

TPR repeat units follow at residues 45 to 78, 137 to 170, 186 to 219, and 356 to 389; these read LHLC…TRIC, IELF…SKEL, ARIR…VEIS, and AETY…QTLL.

Found Associated with the EvC complex composed of EFCAB7, IQCE, EVC2 and EVC.

The protein resides in the cell projection. Its subcellular location is the cilium. Participates positively in the ciliary Hedgehog (Hh) signaling. This chain is Tetratricopeptide repeat protein 23 (TTC23), found in Homo sapiens (Human).